The following is a 127-amino-acid chain: Auxin-responsive protein SAUR76 (127 aa).

A disordered region spans residues serine 20 to valine 40.

Belongs to the ARG7 family. As to expression, expressed in cotyledons, hypocotyls and roots of young seedlings. Expressed in emerging lateral root, leaves, flowers, stamens and filaments.

The protein localises to the nucleus. The protein resides in the cytoplasm. It localises to the cell membrane. May be involved in the regulation of ethylene receptor signaling. Promotes cell expansion and plant growth. Involved in the regulation of cell elongation. This chain is Auxin-responsive protein SAUR76, found in Arabidopsis thaliana (Mouse-ear cress).